The primary structure comprises 1052 residues: RIMS-binding protein 2 (1052 aa).

The interval 115 to 164 is disordered; the sequence is GEYIRPLPQPGDRPEPLSAKPTFLSRSGSARCRSESDMENERNSNTSKQR. A compositionally biased stretch (basic and acidic residues) spans 146-156; sequence CRSESDMENER. Residues 167–234 enclose the SH3 1 domain; that stretch reads GKVHLCVARY…PSNFVDFVQD (68 aa). Fibronectin type-III domains are found at residues 297–390, 393–475, and 489–590; these read VPYP…GKDV, APSH…KKEA, and PPQD…VPPT. 5 disordered regions span residues 584 to 615, 629 to 666, 697 to 716, 767 to 787, and 805 to 829; these read ELLVPPTPHPRPAPQSKPLASSGVPETKDEHL, RAPGPVHGHMLEPPVGPGRRSPSPSRILPQPQGTPVST, SAGQYAASDEEDAYDSPDFK, EMQLEDGGRRRPSGTSHNALK, and FPRGSAGPQRSRPVTVPSIDDYGRD. Positions 585-598 are enriched in pro residues; the sequence is LLVPPTPHPRPAPQ. Positions 645-654 are enriched in low complexity; it reads PGRRSPSPSR. Phosphoserine is present on residues S704 and S712. Phosphoserine is present on residues S832 and S839. Residue T841 is modified to Phosphothreonine. 2 SH3 domains span residues 848–916 and 952–1019; these read LPAR…EIQA and VSTR…EVPD. The segment at 1029 to 1052 is disordered; the sequence is PSHYSQDTPMRSKAKRKKSVHFTP. Residues 1040-1052 are compositionally biased toward basic residues; sequence SKAKRKKSVHFTP.

Belongs to the RIMBP family. In terms of assembly, interacts with RIMS1, RIMS2, CACNA1D and CACNA1B, and potentially with other Ca(2+) channel alpha-1 isoforms.

It localises to the cell membrane. The protein localises to the synapse. Functionally, plays a role in the synaptic transmission as bifunctional linker that interacts simultaneously with RIMS1, RIMS2, CACNA1D and CACNA1B. This chain is RIMS-binding protein 2 (RIMBP2), found in Homo sapiens (Human).